The primary structure comprises 346 residues: Magnesium-protoporphyrin IX monomethyl ester [oxidative] cyclase (346 aa).

This sequence belongs to the AcsF family. It depends on Fe cation as a cofactor.

It carries out the reaction Mg-protoporphyrin IX 13-monomethyl ester + 3 NADPH + 3 O2 + 2 H(+) = 3,8-divinyl protochlorophyllide a + 3 NADP(+) + 5 H2O. It participates in porphyrin-containing compound metabolism; chlorophyll biosynthesis (light-independent). Its function is as follows. Catalyzes the formation of the isocyclic ring in chlorophyll biosynthesis. Mediates the cyclase reaction, which results in the formation of divinylprotochlorophyllide (Pchlide) characteristic of all chlorophylls from magnesium-protoporphyrin IX 13-monomethyl ester (MgPMME). This chain is Magnesium-protoporphyrin IX monomethyl ester [oxidative] cyclase, found in Gloeobacter violaceus (strain ATCC 29082 / PCC 7421).